Here is a 516-residue protein sequence, read N- to C-terminus: Probable 2-isopropylmalate synthase (516 aa).

In terms of domain architecture, Pyruvate carboxyltransferase spans 20 to 271 (VTVFDTTLRD…KTNIRTEYLV (252 aa)).

Belongs to the alpha-IPM synthase/homocitrate synthase family.

The enzyme catalyses 3-methyl-2-oxobutanoate + acetyl-CoA + H2O = (2S)-2-isopropylmalate + CoA + H(+). The protein operates within amino-acid biosynthesis; L-leucine biosynthesis; L-leucine from 3-methyl-2-oxobutanoate: step 1/4. Its function is as follows. Catalyzes the condensation of the acetyl group of acetyl-CoA with 3-methyl-2-oxobutanoate (2-oxoisovalerate) to form 3-carboxy-3-hydroxy-4-methylpentanoate (2-isopropylmalate). This Methanosarcina mazei (strain ATCC BAA-159 / DSM 3647 / Goe1 / Go1 / JCM 11833 / OCM 88) (Methanosarcina frisia) protein is Probable 2-isopropylmalate synthase (leuA).